Reading from the N-terminus, the 147-residue chain is Cell division protein SepF 1 (147 aa).

It belongs to the SepF family. As to quaternary structure, homodimer. Interacts with FtsZ.

Its subcellular location is the cytoplasm. Its function is as follows. Cell division protein that is part of the divisome complex and is recruited early to the Z-ring. Probably stimulates Z-ring formation, perhaps through the cross-linking of FtsZ protofilaments. Its function overlaps with FtsA. This chain is Cell division protein SepF 1, found in Desulforamulus reducens (strain ATCC BAA-1160 / DSM 100696 / MI-1) (Desulfotomaculum reducens).